Reading from the N-terminus, the 483-residue chain is Prenyltransferase vrtC (483 aa).

Belongs to the tryptophan dimethylallyltransferase family.

It functions in the pathway secondary metabolite biosynthesis; terpenoid biosynthesis. Its function is as follows. Prenyltransferase; part of the gene cluster that mediates the biosynthesis of viridicatumtoxin, a tetracycline-like fungal meroterpenoid with a unique, fused spirobicyclic ring system. The first step of the pathway is the production of the malonamoyl-CoA starter unit for the polyketide synthase vrtA. The aldolase vrtJ may be involved in the synthesis of the malonamate substrate for malonamoyl-CoA synthetase vrtB. The polyketide synthase vrtA then may utilize the malonamoyl-CoA starter unit, followed by sequential condensation of eight malonyl-CoA units to form the polyketide backbone. The cyclization of the last ring could be mediated by the lactamase-like protein vrtG. The proposed post-PKS tailoring steps are a hydroxylation at C5 catalyzed the cytochrome P450 monooxygenase vrtE, a hydroxylation at C12a catalyzed by VrtH and/or VrtI, and an O-methylation by the O-methyltransferase vrtF. VrtC is then proposed to catalyze the transfer of a geranyl group synthesized by vrtD to the aromatic C ring of the tetracyclic polyketide intermediate of viridicatumtoxin to yield previridicatumtoxin. Finally, the cytochrome P450 monooxygenase vrtK catalyzes the spirocyclization of the geranyl moiety of previridicatumtoxin to afford viridicatumtoxin. This chain is Prenyltransferase vrtC, found in Penicillium aethiopicum.